Reading from the N-terminus, the 775-residue chain is Serine/threonine-protein kinase ppk6 (775 aa).

A phosphoserine mark is found at Ser132 and Ser134. The region spanning 503-758 (YTTIKELGIG…IEETLQHHWF (256 aa)) is the Protein kinase domain. ATP contacts are provided by residues 509-517 (LGIGAYGQV) and Lys533. Asp636 acts as the Proton acceptor in catalysis.

The protein belongs to the protein kinase superfamily. Ser/Thr protein kinase family.

Its subcellular location is the cytoplasm. It localises to the nucleus. It catalyses the reaction L-seryl-[protein] + ATP = O-phospho-L-seryl-[protein] + ADP + H(+). The catalysed reaction is L-threonyl-[protein] + ATP = O-phospho-L-threonyl-[protein] + ADP + H(+). The sequence is that of Serine/threonine-protein kinase ppk6 (ppk6) from Schizosaccharomyces pombe (strain 972 / ATCC 24843) (Fission yeast).